Reading from the N-terminus, the 264-residue chain is Glutamate racemase (264 aa).

Residues 10 to 11 and 42 to 43 contribute to the substrate site; these read DS and YG. The Proton donor/acceptor role is filled by Cys73. 74 to 75 serves as a coordination point for substrate; the sequence is NT. Cys183 acts as the Proton donor/acceptor in catalysis. 184–185 serves as a coordination point for substrate; it reads TH.

This sequence belongs to the aspartate/glutamate racemases family.

The enzyme catalyses L-glutamate = D-glutamate. It participates in cell wall biogenesis; peptidoglycan biosynthesis. Functionally, provides the (R)-glutamate required for cell wall biosynthesis. In Streptococcus pyogenes serotype M6 (strain ATCC BAA-946 / MGAS10394), this protein is Glutamate racemase.